Consider the following 108-residue polypeptide: UPF0145 protein LJ_1287 (108 aa).

The protein belongs to the UPF0145 family.

This Lactobacillus johnsonii (strain CNCM I-12250 / La1 / NCC 533) protein is UPF0145 protein LJ_1287.